The sequence spans 409 residues: Translation initiation factor 2 subunit gamma (409 aa).

The tr-type G domain maps to 6-203; it reads QPEVNIGLVG…AVQSEIPTPE (198 aa). A G1 region spans residues 15–22; the sequence is GHVDHGKT. Residues Asp-18, Thr-22, Gly-43, and Ser-45 each contribute to the Mg(2+) site. 18-23 is a GTP binding site; that stretch reads DHGKTT. The segment at 43 to 47 is G2; the sequence is GISIR. The tract at residues 90 to 93 is G3; sequence DAPG. Residues 146–149 and 181–183 contribute to the GTP site; these read NKVD and SAG. Residues 146–149 are G4; the sequence is NKVD. Positions 181 to 183 are G5; sequence SAG.

It belongs to the TRAFAC class translation factor GTPase superfamily. Classic translation factor GTPase family. EIF2G subfamily. In terms of assembly, heterotrimer composed of an alpha, a beta and a gamma chain. Requires Mg(2+) as cofactor.

The catalysed reaction is GTP + H2O = GDP + phosphate + H(+). In terms of biological role, eIF-2 functions in the early steps of protein synthesis by forming a ternary complex with GTP and initiator tRNA. This chain is Translation initiation factor 2 subunit gamma, found in Haloarcula marismortui (strain ATCC 43049 / DSM 3752 / JCM 8966 / VKM B-1809) (Halobacterium marismortui).